Consider the following 594-residue polypeptide: Adenine deaminase 1 (594 aa).

This sequence belongs to the metallo-dependent hydrolases superfamily. Adenine deaminase family. Mn(2+) is required as a cofactor.

The catalysed reaction is adenine + H2O + H(+) = hypoxanthine + NH4(+). This is Adenine deaminase 1 from Latilactobacillus sakei subsp. sakei (strain 23K) (Lactobacillus sakei subsp. sakei).